We begin with the raw amino-acid sequence, 396 residues long: Probable peptidoglycan glycosyltransferase FtsW (396 aa).

The Cytoplasmic segment spans residues 1–27; it reads MPFLDKVKQQYEDWTRITPSNLLYDRA. Residues 28–48 form a helical membrane-spanning segment; it reads LLLLFFVLLLIGLLAVSSASI. At 49–64 the chain is on the periplasmic side; the sequence is PVGTRLFKDPFYFAKR. Residues 65-85 form a helical membrane-spanning segment; the sequence is DAIYVFLSCVTCYLCVQVPME. Residues 86-93 are Cytoplasmic-facing; it reads KWEQWHVR. The helical transmembrane segment at 94 to 114 threads the bilayer; sequence LFAFAIFLLILVLIPGIGLSV. The Periplasmic portion of the chain corresponds to 115-122; that stretch reads NGARRWIP. Residues 123–143 form a helical membrane-spanning segment; sequence MVLFNFQPAEFAKLALTCFLA. Residues 144–157 lie on the Cytoplasmic side of the membrane; the sequence is SYFTRKYDEVRSRK. The chain crosses the membrane as a helical span at residues 158 to 178; sequence LSAFKPFALMGLMGLFLLSQP. Residues 179–183 are Periplasmic-facing; that stretch reads DLGST. 2 consecutive transmembrane segments (helical) span residues 184-204 and 205-225; these read VVLF…FWQF and VGLM…SAYR. The Periplasmic portion of the chain corresponds to 226 to 285; the sequence is LKRFTGFLDPFKDPYGTGFQLSNSLMAFGRGEWVGEGLGNSIQKLEYLPEAHTDFVMAVV. The chain crosses the membrane as a helical span at residues 286–306; it reads GEEFGFLGILVIVILLGLLIF. Residues 307–323 are Cytoplasmic-facing; that stretch reads RAMKIGRESLLLEQRFK. The chain crosses the membrane as a helical span at residues 324–344; the sequence is GFFAFGISFWIFFQGFVNLGM. The Periplasmic segment spans residues 345 to 355; the sequence is SLGLLPTKGLT. The chain crosses the membrane as a helical span at residues 356–376; the sequence is FPLISYGGSSLIIMSMTIGLL. Residues 377–396 are Cytoplasmic-facing; that stretch reads LRIDHENRLMRIGQARLRDD.

This sequence belongs to the SEDS family. FtsW subfamily.

It is found in the cell inner membrane. The catalysed reaction is [GlcNAc-(1-&gt;4)-Mur2Ac(oyl-L-Ala-gamma-D-Glu-L-Lys-D-Ala-D-Ala)](n)-di-trans,octa-cis-undecaprenyl diphosphate + beta-D-GlcNAc-(1-&gt;4)-Mur2Ac(oyl-L-Ala-gamma-D-Glu-L-Lys-D-Ala-D-Ala)-di-trans,octa-cis-undecaprenyl diphosphate = [GlcNAc-(1-&gt;4)-Mur2Ac(oyl-L-Ala-gamma-D-Glu-L-Lys-D-Ala-D-Ala)](n+1)-di-trans,octa-cis-undecaprenyl diphosphate + di-trans,octa-cis-undecaprenyl diphosphate + H(+). Its pathway is cell wall biogenesis; peptidoglycan biosynthesis. Peptidoglycan polymerase that is essential for cell division. The sequence is that of Probable peptidoglycan glycosyltransferase FtsW from Pasteurella multocida (strain Pm70).